Consider the following 258-residue polypeptide: Deoxyribose-phosphate aldolase (258 aa).

Catalysis depends on D102, which acts as the Proton donor/acceptor. K165 (schiff-base intermediate with acetaldehyde) is an active-site residue. The active-site Proton donor/acceptor is the K199.

The protein belongs to the DeoC/FbaB aldolase family. DeoC type 2 subfamily.

The protein localises to the cytoplasm. It carries out the reaction 2-deoxy-D-ribose 5-phosphate = D-glyceraldehyde 3-phosphate + acetaldehyde. The protein operates within carbohydrate degradation; 2-deoxy-D-ribose 1-phosphate degradation; D-glyceraldehyde 3-phosphate and acetaldehyde from 2-deoxy-alpha-D-ribose 1-phosphate: step 2/2. In terms of biological role, catalyzes a reversible aldol reaction between acetaldehyde and D-glyceraldehyde 3-phosphate to generate 2-deoxy-D-ribose 5-phosphate. This chain is Deoxyribose-phosphate aldolase, found in Aliivibrio fischeri (strain ATCC 700601 / ES114) (Vibrio fischeri).